We begin with the raw amino-acid sequence, 465 residues long: Light-independent protochlorophyllide reductase subunit N (465 aa).

C23, C48, and C108 together coordinate [4Fe-4S] cluster.

This sequence belongs to the BchN/ChlN family. Protochlorophyllide reductase is composed of three subunits; ChlL, ChlN and ChlB. Forms a heterotetramer of two ChlB and two ChlN subunits. [4Fe-4S] cluster serves as cofactor.

The catalysed reaction is chlorophyllide a + oxidized 2[4Fe-4S]-[ferredoxin] + 2 ADP + 2 phosphate = protochlorophyllide a + reduced 2[4Fe-4S]-[ferredoxin] + 2 ATP + 2 H2O. It functions in the pathway porphyrin-containing compound metabolism; chlorophyll biosynthesis (light-independent). Functionally, component of the dark-operative protochlorophyllide reductase (DPOR) that uses Mg-ATP and reduced ferredoxin to reduce ring D of protochlorophyllide (Pchlide) to form chlorophyllide a (Chlide). This reaction is light-independent. The NB-protein (ChlN-ChlB) is the catalytic component of the complex. In Trichodesmium erythraeum (strain IMS101), this protein is Light-independent protochlorophyllide reductase subunit N.